The following is a 233-amino-acid chain: Synaptogyrin-4 (233 aa).

The 152-residue stretch at 18–169 (FLRRPKSISR…QAYLAFQDLR (152 aa)) folds into the MARVEL domain. Helical transmembrane passes span 25–45 (ISRI…LTDG), 66–86 (CSFA…FLAI), 104–124 (LLDF…FCFL), and 145–165 (AAIA…YLAF). The interval 191–233 (SPSSTSPSNPPITGPNSLSYTSSALSPYMTTPKAPRLAMMPDS) is disordered. Polar residues predominate over residues 204-219 (GPNSLSYTSSALSPYM).

This sequence belongs to the synaptogyrin family.

It is found in the membrane. The protein is Synaptogyrin-4 (Syngr4) of Mus musculus (Mouse).